The primary structure comprises 161 residues: Periplasmic chaperone Spy (161 aa).

The signal sequence occupies residues 1–23 (MRKLTALFVASTLALGAANLAHA). Residues 140 to 161 (ANFEKRLTERPAAKGKMPATAE) form a disordered region. Residues 142-151 (FEKRLTERPA) are compositionally biased toward basic and acidic residues.

The protein belongs to the CpxP/Spy family. As to quaternary structure, homodimer.

The protein resides in the periplasm. Its function is as follows. An ATP-independent periplasmic chaperone, decreases protein aggregation and helps protein refolding. Binds substrate over a large region of its convex inner surface. Substrate protein folds while it is bound to chaperone. Increasing Spy flexibility increases its substrate affinity and overall chaperone activity (shown for 3 different substrates). Protects proteins in vitro against tannin inactivation; tannins have antimicrobial activity. Overexpression enhances the stability of otherwise unstable periplasmic proteins. This Escherichia coli (strain K12) protein is Periplasmic chaperone Spy.